The primary structure comprises 427 residues: 3-phosphoshikimate 1-carboxyvinyltransferase (427 aa).

3-phosphoshikimate-binding residues include lysine 22, serine 23, and arginine 27. Position 22 (lysine 22) interacts with phosphoenolpyruvate. Residues glycine 96 and arginine 124 each coordinate phosphoenolpyruvate. Positions 169, 170, 171, 197, 313, 336, and 340 each coordinate 3-phosphoshikimate. Phosphoenolpyruvate is bound at residue glutamine 171. Aspartate 313 (proton acceptor) is an active-site residue. Residues arginine 344, arginine 386, and lysine 411 each contribute to the phosphoenolpyruvate site.

The protein belongs to the EPSP synthase family. As to quaternary structure, monomer.

It localises to the cytoplasm. It catalyses the reaction 3-phosphoshikimate + phosphoenolpyruvate = 5-O-(1-carboxyvinyl)-3-phosphoshikimate + phosphate. It functions in the pathway metabolic intermediate biosynthesis; chorismate biosynthesis; chorismate from D-erythrose 4-phosphate and phosphoenolpyruvate: step 6/7. In terms of biological role, catalyzes the transfer of the enolpyruvyl moiety of phosphoenolpyruvate (PEP) to the 5-hydroxyl of shikimate-3-phosphate (S3P) to produce enolpyruvyl shikimate-3-phosphate and inorganic phosphate. This chain is 3-phosphoshikimate 1-carboxyvinyltransferase, found in Escherichia coli O127:H6 (strain E2348/69 / EPEC).